Consider the following 168-residue polypeptide: Small ribosomal subunit protein uS5 (168 aa).

The S5 DRBM domain maps to 11-74; it reads YSEKVVKIDR…EAAKKHLVKI (64 aa).

Belongs to the universal ribosomal protein uS5 family. In terms of assembly, part of the 30S ribosomal subunit. Contacts proteins S4 and S8.

In terms of biological role, with S4 and S12 plays an important role in translational accuracy. Located at the back of the 30S subunit body where it stabilizes the conformation of the head with respect to the body. This is Small ribosomal subunit protein uS5 from Leptospira borgpetersenii serovar Hardjo-bovis (strain JB197).